Reading from the N-terminus, the 314-residue chain is Methionyl-tRNA formyltransferase (314 aa).

113–116 contacts (6S)-5,6,7,8-tetrahydrofolate; the sequence is SLLP.

This sequence belongs to the Fmt family.

It carries out the reaction L-methionyl-tRNA(fMet) + (6R)-10-formyltetrahydrofolate = N-formyl-L-methionyl-tRNA(fMet) + (6S)-5,6,7,8-tetrahydrofolate + H(+). Its function is as follows. Attaches a formyl group to the free amino group of methionyl-tRNA(fMet). The formyl group appears to play a dual role in the initiator identity of N-formylmethionyl-tRNA by promoting its recognition by IF2 and preventing the misappropriation of this tRNA by the elongation apparatus. The chain is Methionyl-tRNA formyltransferase from Pseudomonas syringae pv. tomato (strain ATCC BAA-871 / DC3000).